Here is a 125-residue protein sequence, read N- to C-terminus: Holo-[acyl-carrier-protein] synthase (125 aa).

The Mg(2+) site is built by D8 and E57.

It belongs to the P-Pant transferase superfamily. AcpS family. Mg(2+) serves as cofactor.

The protein localises to the cytoplasm. The catalysed reaction is apo-[ACP] + CoA = holo-[ACP] + adenosine 3',5'-bisphosphate + H(+). Its function is as follows. Transfers the 4'-phosphopantetheine moiety from coenzyme A to a Ser of acyl-carrier-protein. This chain is Holo-[acyl-carrier-protein] synthase, found in Dechloromonas aromatica (strain RCB).